The sequence spans 72 residues: Translation initiation factor IF-1 (72 aa).

The 72-residue stretch at M1–K72 folds into the S1-like domain.

This sequence belongs to the IF-1 family. Component of the 30S ribosomal translation pre-initiation complex which assembles on the 30S ribosome in the order IF-2 and IF-3, IF-1 and N-formylmethionyl-tRNA(fMet); mRNA recruitment can occur at any time during PIC assembly.

Its subcellular location is the cytoplasm. In terms of biological role, one of the essential components for the initiation of protein synthesis. Stabilizes the binding of IF-2 and IF-3 on the 30S subunit to which N-formylmethionyl-tRNA(fMet) subsequently binds. Helps modulate mRNA selection, yielding the 30S pre-initiation complex (PIC). Upon addition of the 50S ribosomal subunit IF-1, IF-2 and IF-3 are released leaving the mature 70S translation initiation complex. The sequence is that of Translation initiation factor IF-1 from Listeria innocua serovar 6a (strain ATCC BAA-680 / CLIP 11262).